Consider the following 279-residue polypeptide: Four and a half LIM domains protein 2 (279 aa).

The segment at 7-31 (CHHCNESLYGKKYILKEENPHCVAC) adopts a C4-type zinc-finger fold. LIM zinc-binding domains follow at residues 40-92 (CEEC…CTDC), 101-153 (CQEC…CVPC), and 162-212 (CVQC…CLTC). A Glycyl lysine isopeptide (Lys-Gly) (interchain with G-Cter in SUMO2) cross-link involves residue Lys78. Residues Lys167 and Lys220 each participate in a glycyl lysine isopeptide (Lys-Gly) (interchain with G-Cter in SUMO2) cross-link. An LIM zinc-binding 4 domain is found at 221–275 (CAGCTNPISGLGGTKYISFEERQWHNDCFNCKKCSLSLVGRGFLTERDDILCPDC). Ser238 bears the Phosphoserine mark.

Interacts with ZNF638 and TTN/titin. Interacts with E4F1. Interacts with GRB7. Interacts with SIRT1 and FOXO1. Interacts with CEFIP. Interacts with calcineurin. Interacts with FOXK1. In terms of tissue distribution, highly expressed in heart but also detectable in brain and skeletal muscle.

The protein resides in the cytoplasm. It is found in the nucleus. It localises to the myofibril. The protein localises to the sarcomere. Its subcellular location is the z line. Functionally, may function as a molecular transmitter linking various signaling pathways to transcriptional regulation. Negatively regulates the transcriptional repressor E4F1 and may function in cell growth. Inhibits the transcriptional activity of FOXO1 and its apoptotic function by enhancing the interaction of FOXO1 with SIRT1 and FOXO1 deacetylation. Negatively regulates the calcineurin/NFAT signaling pathway in cardiomyocytes. This chain is Four and a half LIM domains protein 2 (Fhl2), found in Mus musculus (Mouse).